The following is a 208-amino-acid chain: Bacitracin transport permease protein BCRB (208 aa).

Helical transmembrane passes span 23-43 (LYIV…YLFN), 70-90 (VLLL…TLLF), 111-131 (FMIG…VTLL), 135-155 (YVPT…VYGT), 159-179 (ALFP…PEYP), and 182-202 (YSFI…IVYF).

It localises to the cell membrane. Its function is as follows. Part of the binding-protein-dependent transport system for bacitracin that confer resistance to this antibiotic; probably responsible for the translocation of the substrate across the membrane. This is Bacitracin transport permease protein BCRB (bcrB) from Bacillus licheniformis.